The chain runs to 776 residues: Microtubule-associated protein tau (776 aa).

Residues 1–26 (MAEPRQEFEVMEDHAGTYGLGDRKDQ) are compositionally biased toward basic and acidic residues. A disordered region spans residues 1-591 (MAEPRQEFEV…PVPMPDLKNV (591 aa)). Position 2 is an N-acetylalanine (Ala2). Phosphotyrosine is present on residues Tyr18 and Tyr29. A Glycyl lysine isopeptide (Lys-Gly) (interchain with G-Cter in ubiquitin) cross-link involves residue Lys44. Residues Ser46 and Ser61 each carry the phosphoserine modification. Polar residues predominate over residues 61 to 71 (SETSDAKSTPT). Residues Thr69, Thr71, and Thr111 each carry the phosphothreonine modification. 2 stretches are compositionally biased toward basic and acidic residues: residues 179-189 (EGGRHAPELLK) and 207-216 (GGKERPGSKE). Residue Ser214 is modified to Phosphoserine. A compositionally biased stretch (acidic residues) spans 217–228 (EVDEDRDVDESS). Composition is skewed to basic and acidic residues over residues 293–303 (KGQDAHLEFTF) and 314–323 (EQAHSEEHLG). The segment covering 324–340 (RAAFPGAPGEGPEARGP) has biased composition (low complexity). 2 stretches are compositionally biased toward basic and acidic residues: residues 344-356 (EDTKEADLPEPSE) and 381-393 (KSKDGTGSDDKKA). Positions 440–452 (KYVSSVTPRTGSS) are enriched in polar residues. A compositionally biased stretch (basic and acidic residues) spans 455-466 (KEMKLKGADGKT). Thr470 bears the Phosphothreonine mark. Arg472 carries the omega-N-methylarginine modification. N6,N6-dimethyllysine; alternate is present on Lys480. The residue at position 480 (Lys480) is an N6-acetyllysine; alternate. Thr486, Thr492, and Thr498 each carry phosphothreonine. Ser502, Ser526, and Ser530 each carry phosphoserine. Basic and acidic residues predominate over residues 517 to 528 (RSERGEPPKSGD). A compositionally biased stretch (low complexity) spans 529–549 (RSGYSSPGSPGTPGSRSRTPS). A Phosphotyrosine modification is found at Tyr532. Residues Ser533, Ser534, and Ser537 each carry the phosphoserine modification. Thr540 and Thr547 each carry phosphothreonine. Ser549 carries the post-translational modification Phosphoserine. The residue at position 552 (Thr552) is a Phosphothreonine. Lys560 is modified (N6-acetyllysine). The residue at position 566 (Thr566) is a Phosphothreonine. Phosphoserine occurs at positions 570 and 572. 4 Tau/MAP repeats span residues 579 to 609 (QTAPVPMPDLKNVKSKIGSTENLKHQPGGGK), 610 to 640 (VQIINKKLDLSNVQSKCGSKDNIKHVPGGGS), 641 to 671 (VQIVYKPVDLSKVTSKCGSLGNIHHKPGGGQ), and 672 to 703 (VEVKSEKLDFKDRVQSKIGSLDNITHVPGGGN). Lys589 participates in a covalent cross-link: Glycyl lysine isopeptide (Lys-Gly) (interchain with G-Cter in ubiquitin). An N6-acetyllysine; alternate modification is found at Lys594. At Lys594 the chain carries N6-methyllysine; alternate. Lys594 participates in a covalent cross-link: Glycyl lysine isopeptide (Lys-Gly) (interchain with G-Cter in ubiquitin); alternate. Ser597 is modified (phosphoserine). A Glycyl lysine isopeptide (Lys-Gly) (interchain with G-Cter in ubiquitin) cross-link involves residue Lys602. Position 616 is an N6-acetyllysine; alternate (Lys616). Lys616 is covalently cross-linked (Glycyl lysine isopeptide (Lys-Gly) (interchain with G-Cter in ubiquitin); alternate). 2 positions are modified to phosphoserine: Ser620 and Ser624. N6-acetyllysine is present on Lys625. Ser628 carries the post-translational modification Phosphoserine. The residue at position 633 (Lys633) is an N6-acetyllysine; alternate. Lys633 is covalently cross-linked (Glycyl lysine isopeptide (Lys-Gly) (interchain with G-Cter in ubiquitin); alternate). The residue at position 640 (Ser640) is a Phosphoserine. Lys646 is subject to N6,N6-dimethyllysine; alternate. An N6-acetyllysine; alternate mark is found at Lys646, Lys652, and Lys656. Residues Lys646, Lys652, and Lys656 each participate in a glycyl lysine isopeptide (Lys-Gly) (interchain with G-Cter in ubiquitin); alternate cross-link. Residue Ser659 is modified to Phosphoserine. N6-acetyllysine; alternate occurs at positions 666, 678, and 682. Residues Lys666, Lys678, and Lys682 each participate in a glycyl lysine isopeptide (Lys-Gly) (interchain with G-Cter in ubiquitin); alternate cross-link. Arg684 bears the Omega-N-methylarginine mark. Position 687 is a phosphoserine (Ser687). A Glycyl lysine isopeptide (Lys-Gly) (interchain with G-Cter in ubiquitin) cross-link involves residue Lys688. Ser691 carries the post-translational modification Phosphoserine. Residue Lys704 is modified to N6-acetyllysine; alternate. A Glycyl lysine isopeptide (Lys-Gly) (interchain with G-Cter in ubiquitin); alternate cross-link involves residue Lys704. Residue Lys710 forms a Glycyl lysine isopeptide (Lys-Gly) (interchain with G-Cter in ubiquitin) linkage. Lys720 carries the post-translational modification N6-acetyllysine; alternate. Residue Lys720 forms a Glycyl lysine isopeptide (Lys-Gly) (interchain with G-Cter in ubiquitin); alternate linkage. The residue at position 729 (Tyr729) is a Phosphotyrosine. Residues Ser731 and Ser735 each carry the phosphoserine modification. The interval 733 to 752 (VVSGDTSPRHLSNVSSTGSI) is disordered. The span at 736–751 (GDTSPRHLSNVSSTGS) shows a compositional bias: polar residues. Thr738 bears the Phosphothreonine mark. Ser739, Ser744, Ser751, and Ser757 each carry phosphoserine. A Phosphothreonine modification is found at Thr762.

In terms of assembly, interacts with MARK1, MARK2, MARK3 and MARK4. Interacts with SQSTM1 when polyubiquitinated. Interacts with PSMC2 through SQSTM1. Interacts with FKBP4. Binds to CSNK1D. Interacts with SGK1. Interacts with EPM2A; the interaction dephosphorylates MAPT at Ser-396. Interacts with PIN1. Interacts with LRRK2. Interacts with LRP1, leading to endocytosis; this interaction is reduced in the presence of LRPAP1/RAP. In terms of processing, polyubiquitinated. Requires functional TRAF6 and may provoke SQSTM1-dependent degradation by the proteasome. Post-translationally, phosphorylation at various serine and threonine residues in S-P or T-P motifs by proline-directed protein kinases (PDPK1, CDK1, CDK5, GSK3, MAPK) (a few sites per protein in interphase, more in mitosis), and at serine residues in K-X-G-S motifs by MAP/microtubule affinity-regulating kinase (MARK1, MARK2, MARK3 or MARK4), causing detachment from microtubules, and their disassembly. Phosphorylation at Ser-597 by BRSK1 and BRSK2 in neurons affects ability to bind microtubules and plays a role in neuron polarization. Phosphorylated by PHK. Dephosphorylation at several serine and threonine residues by the serine/threonine phosphatase PPP5C. Phosphorylation at Ser-214 by SGK1 mediates microtubule depolymerization and neurite formation in hippocampal neurons.

The protein resides in the cytoplasm. Its subcellular location is the cytosol. It localises to the cell membrane. The protein localises to the cytoskeleton. It is found in the cell projection. The protein resides in the axon. Its subcellular location is the dendrite. Functionally, promotes microtubule assembly and stability, and might be involved in the establishment and maintenance of neuronal polarity. The C-terminus binds axonal microtubules while the N-terminus binds neural plasma membrane components, suggesting that tau functions as a linker protein between both. Axonal polarity is predetermined by tau localization (in the neuronal cell) in the domain of the cell body defined by the centrosome. The short isoforms allow plasticity of the cytoskeleton whereas the longer isoforms may preferentially play a role in its stabilization. The chain is Microtubule-associated protein tau (MAPT) from Pan troglodytes (Chimpanzee).